Here is a 388-residue protein sequence, read N- to C-terminus: Mitochondrial distribution and morphology protein 12 (388 aa).

In terms of domain architecture, SMP-LTD spans 1 to 388 (MSLDINWSLL…VFPNFHTVAL (388 aa)). Disordered stretches follow at residues 75 to 101 (DDEG…RNEA) and 209 to 251 (PMSI…SSSS). Over residues 83–101 (EEKQREKEREERDKLRNEA) the composition is skewed to basic and acidic residues. Over residues 234–243 (PSPPAHPAGL) the composition is skewed to pro residues.

This sequence belongs to the MDM12 family. As to quaternary structure, component of the ER-mitochondria encounter structure (ERMES) or MDM complex, composed of MMM1, MDM10, MDM12 and MDM34. An MMM1 homodimer associates with one molecule of MDM12 on each side in a pairwise head-to-tail manner, and the SMP-LTD domains of MMM1 and MDM12 generate a continuous hydrophobic tunnel for phospholipid trafficking.

It localises to the mitochondrion outer membrane. The protein localises to the endoplasmic reticulum membrane. Component of the ERMES/MDM complex, which serves as a molecular tether to connect the endoplasmic reticulum (ER) and mitochondria. Components of this complex are involved in the control of mitochondrial shape and protein biogenesis, and function in nonvesicular lipid trafficking between the ER and mitochondria. MDM12 is required for the interaction of the ER-resident membrane protein MMM1 and the outer mitochondrial membrane-resident beta-barrel protein MDM10. The MDM12-MMM1 subcomplex functions in the major beta-barrel assembly pathway that is responsible for biogenesis of all mitochondrial outer membrane beta-barrel proteins, and acts in a late step after the SAM complex. The MDM10-MDM12-MMM1 subcomplex further acts in the TOM40-specific pathway after the action of the MDM12-MMM1 complex. Essential for establishing and maintaining the structure of mitochondria and maintenance of mtDNA nucleoids. In Cryptococcus neoformans var. neoformans serotype D (strain B-3501A) (Filobasidiella neoformans), this protein is Mitochondrial distribution and morphology protein 12.